The primary structure comprises 211 residues: Uracil phosphoribosyltransferase (211 aa).

Residues arginine 78, arginine 103, and 130–138 contribute to the 5-phospho-alpha-D-ribose 1-diphosphate site; that span reads DPMLATGSS. Residues isoleucine 193 and 198–200 contribute to the uracil site; that span reads GDA. Residue aspartate 199 coordinates 5-phospho-alpha-D-ribose 1-diphosphate.

This sequence belongs to the UPRTase family. It depends on Mg(2+) as a cofactor.

It carries out the reaction UMP + diphosphate = 5-phospho-alpha-D-ribose 1-diphosphate + uracil. The protein operates within pyrimidine metabolism; UMP biosynthesis via salvage pathway; UMP from uracil: step 1/1. With respect to regulation, allosterically activated by GTP. In terms of biological role, catalyzes the conversion of uracil and 5-phospho-alpha-D-ribose 1-diphosphate (PRPP) to UMP and diphosphate. This Acinetobacter baylyi (strain ATCC 33305 / BD413 / ADP1) protein is Uracil phosphoribosyltransferase.